The sequence spans 51 residues: Small polypeptide DEVIL 1 (51 aa).

The tract at residues 1–25 (MEMKRVMMSSAERSKEKKRSISRRL) is disordered. A compositionally biased stretch (basic residues) spans 16-25 (EKKRSISRRL). A required for DVL/RTFL small polypeptide activity region spans residues 20 to 51 (SISRRLGKYMKEQKGRIYIIRRCMVMLLCSHD). A helical membrane pass occupies residues 28 to 44 (YMKEQKGRIYIIRRCMV).

This sequence belongs to the DVL/RTFL small polypeptides family. In terms of tissue distribution, mostly expressed in leaves and, to a lower extent, in roots and stems.

The protein resides in the cell membrane. Functionally, small polypeptide acting as a regulatory molecule which coordinates cellular responses required for differentiation, growth and development, including leaves shape, pedicule elongation, inflorescence organization and fruit maturation, probably by restricting polar cell proliferation in lateral organs and coordinating socket cell recruitment and differentiation at trichome sites. The chain is Small polypeptide DEVIL 1 from Arabidopsis thaliana (Mouse-ear cress).